Reading from the N-terminus, the 327-residue chain is GMP reductase (327 aa).

The active-site Thioimidate intermediate is Cys-176. 205-228 contacts NADP(+); sequence IIADGGIRTHGDIAKSIRFGASMV.

The protein belongs to the IMPDH/GMPR family. GuaC type 2 subfamily.

It catalyses the reaction IMP + NH4(+) + NADP(+) = GMP + NADPH + 2 H(+). Functionally, catalyzes the irreversible NADPH-dependent deamination of GMP to IMP. It functions in the conversion of nucleobase, nucleoside and nucleotide derivatives of G to A nucleotides, and in maintaining the intracellular balance of A and G nucleotides. In Streptococcus gordonii (strain Challis / ATCC 35105 / BCRC 15272 / CH1 / DL1 / V288), this protein is GMP reductase.